Consider the following 454-residue polypeptide: Bifunctional protein GlmU (454 aa).

Residues 1-226 (MALNVVILAA…AIEVEGANNR (226 aa)) form a pyrophosphorylase region. Residues 8–11 (LAAG), Lys-22, Gln-73, 78–79 (GT), 100–102 (YGD), Gly-137, Glu-151, Asn-166, and Asn-224 contribute to the UDP-N-acetyl-alpha-D-glucosamine site. Asp-102 is a Mg(2+) binding site. Asn-224 serves as a coordination point for Mg(2+). Positions 227–247 (VQLAQLERAYQAREAEKLMIA) are linker. The interval 248–454 (GANLRDPSRI…GWQRPVKIKK (207 aa)) is N-acetyltransferase. UDP-N-acetyl-alpha-D-glucosamine contacts are provided by Arg-330 and Lys-348. Residue His-360 is the Proton acceptor of the active site. Tyr-363 and Asn-374 together coordinate UDP-N-acetyl-alpha-D-glucosamine. Acetyl-CoA-binding positions include Ala-377, 383–384 (NY), Ser-402, Ala-420, and Arg-437.

It in the N-terminal section; belongs to the N-acetylglucosamine-1-phosphate uridyltransferase family. The protein in the C-terminal section; belongs to the transferase hexapeptide repeat family. As to quaternary structure, homotrimer. Requires Mg(2+) as cofactor.

It is found in the cytoplasm. It catalyses the reaction alpha-D-glucosamine 1-phosphate + acetyl-CoA = N-acetyl-alpha-D-glucosamine 1-phosphate + CoA + H(+). The catalysed reaction is N-acetyl-alpha-D-glucosamine 1-phosphate + UTP + H(+) = UDP-N-acetyl-alpha-D-glucosamine + diphosphate. The protein operates within nucleotide-sugar biosynthesis; UDP-N-acetyl-alpha-D-glucosamine biosynthesis; N-acetyl-alpha-D-glucosamine 1-phosphate from alpha-D-glucosamine 6-phosphate (route II): step 2/2. Its pathway is nucleotide-sugar biosynthesis; UDP-N-acetyl-alpha-D-glucosamine biosynthesis; UDP-N-acetyl-alpha-D-glucosamine from N-acetyl-alpha-D-glucosamine 1-phosphate: step 1/1. It participates in bacterial outer membrane biogenesis; LPS lipid A biosynthesis. Functionally, catalyzes the last two sequential reactions in the de novo biosynthetic pathway for UDP-N-acetylglucosamine (UDP-GlcNAc). The C-terminal domain catalyzes the transfer of acetyl group from acetyl coenzyme A to glucosamine-1-phosphate (GlcN-1-P) to produce N-acetylglucosamine-1-phosphate (GlcNAc-1-P), which is converted into UDP-GlcNAc by the transfer of uridine 5-monophosphate (from uridine 5-triphosphate), a reaction catalyzed by the N-terminal domain. The polypeptide is Bifunctional protein GlmU (Shewanella oneidensis (strain ATCC 700550 / JCM 31522 / CIP 106686 / LMG 19005 / NCIMB 14063 / MR-1)).